The sequence spans 259 residues: Malonyl-[acyl-carrier protein] O-methyltransferase (259 aa).

This sequence belongs to the methyltransferase superfamily.

It carries out the reaction malonyl-[ACP] + S-adenosyl-L-methionine = malonyl-[ACP] methyl ester + S-adenosyl-L-homocysteine. The protein operates within cofactor biosynthesis; biotin biosynthesis. In terms of biological role, converts the free carboxyl group of a malonyl-thioester to its methyl ester by transfer of a methyl group from S-adenosyl-L-methionine (SAM). It allows to synthesize pimeloyl-ACP via the fatty acid synthetic pathway. This Anoxybacillus flavithermus (strain DSM 21510 / WK1) protein is Malonyl-[acyl-carrier protein] O-methyltransferase.